We begin with the raw amino-acid sequence, 464 residues long: ATP synthase subunit beta 1 (464 aa).

ATP is bound at residue 153-160; the sequence is GGAGVGKT.

The protein belongs to the ATPase alpha/beta chains family. In terms of assembly, F-type ATPases have 2 components, CF(1) - the catalytic core - and CF(0) - the membrane proton channel. CF(1) has five subunits: alpha(3), beta(3), gamma(1), delta(1), epsilon(1). CF(0) has three main subunits: a(1), b(2) and c(9-12). The alpha and beta chains form an alternating ring which encloses part of the gamma chain. CF(1) is attached to CF(0) by a central stalk formed by the gamma and epsilon chains, while a peripheral stalk is formed by the delta and b chains.

It is found in the cell inner membrane. The catalysed reaction is ATP + H2O + 4 H(+)(in) = ADP + phosphate + 5 H(+)(out). Its function is as follows. Produces ATP from ADP in the presence of a proton gradient across the membrane. The catalytic sites are hosted primarily by the beta subunits. The polypeptide is ATP synthase subunit beta 1 (Burkholderia mallei (strain SAVP1)).